The sequence spans 597 residues: Elongation factor 4 (597 aa).

A tr-type G domain is found at Lys2–Glu184. GTP contacts are provided by residues Asp14–Thr19 and Asn131–Asp134.

The protein belongs to the TRAFAC class translation factor GTPase superfamily. Classic translation factor GTPase family. LepA subfamily.

The protein resides in the cell inner membrane. It carries out the reaction GTP + H2O = GDP + phosphate + H(+). Functionally, required for accurate and efficient protein synthesis under certain stress conditions. May act as a fidelity factor of the translation reaction, by catalyzing a one-codon backward translocation of tRNAs on improperly translocated ribosomes. Back-translocation proceeds from a post-translocation (POST) complex to a pre-translocation (PRE) complex, thus giving elongation factor G a second chance to translocate the tRNAs correctly. Binds to ribosomes in a GTP-dependent manner. In Vibrio parahaemolyticus serotype O3:K6 (strain RIMD 2210633), this protein is Elongation factor 4.